We begin with the raw amino-acid sequence, 236 residues long: Ribitol-5-phosphate cytidylyltransferase (236 aa).

Residues 7-10 (LAGG) and 80-86 (GTDRNET) contribute to the CTP site.

It belongs to the IspD/TarI cytidylyltransferase family. TarI subfamily.

The enzyme catalyses D-ribitol 5-phosphate + CTP + H(+) = CDP-L-ribitol + diphosphate. It participates in cell wall biogenesis; poly(ribitol phosphate) teichoic acid biosynthesis. Catalyzes the transfer of the cytidylyl group of CTP to D-ribitol 5-phosphate. This Listeria monocytogenes serovar 1/2a (strain ATCC BAA-679 / EGD-e) protein is Ribitol-5-phosphate cytidylyltransferase.